The chain runs to 198 residues: Remorin (198 aa).

The segment covering 1-11 (MAELEAKKVEI) has biased composition (basic and acidic residues). The disordered stretch occupies residues 1-24 (MAELEAKKVEIVDPAPPAPGPVEA). A coiled-coil region spans residues 97 to 184 (EESEKSKAEN…LKAEELAAKY (88 aa)).

This sequence belongs to the remorin family. Post-translationally, the N-terminus is blocked. In terms of processing, phosphorylated.

Its subcellular location is the cell membrane. Functionally, binds to both simple and complex galacturonides. May be involved in cell-to-cell signaling and molecular transport. The sequence is that of Remorin from Solanum tuberosum (Potato).